A 325-amino-acid chain; its full sequence is Centromere protein O (325 aa).

The tract at residues 1-35 (MEEERNSDEKENALCGRSLTAASRDGGGRMPAAPL) is disordered. Residues 55–112 (LEMLEAQAHELGLKQEEKEQQEKKLDRLKARVQELRARRDELRAKVELQEKRLLDKEG) are a coiled coil.

This sequence belongs to the CENP-O/MCM21 family. As to quaternary structure, component of the CENPA-HI complex, at least composed of CENPH, CENPI, CENPK, CENPL, CENPM, CENPO and CENPP. Component of a discrete complex composed of at least CENPO, CENPP, CENPQ, CENPR and CENPU.

It localises to the nucleus. The protein resides in the chromosome. The protein localises to the centromere. Component of the CENPA-HI complex, a centromeric complex involved in assembly of kinetochore proteins, mitotic progression and chromosome segregation. Involved in kinetochore assembly and required for recovery from spindle damage. This chain is Centromere protein O (CENPO), found in Gallus gallus (Chicken).